We begin with the raw amino-acid sequence, 368 residues long: Putative potassium channel KAT5 (368 aa).

The next 3 helical transmembrane spans lie at 33–53 (WWHM…PFEL), 97–117 (LLNL…ARVE), and 132–152 (LLCV…WMVF). Positions 180–199 (CAVYWSITTLATVGYGDLHA) form an intramembrane region, pore-forming. A helical transmembrane segment spans residues 206–226 (LFSIAFMLFNMGLTSYIIGNI). 225 to 344 (NITNLVVRET…CIVFSNFILV (120 aa)) provides a ligand contact to a nucleoside 3',5'-cyclic phosphate.

It belongs to the potassium channel family. Plant (TC 1.A.1.4) subfamily.

It is found in the membrane. Putative inward-rectifying potassium channel. The protein is Putative potassium channel KAT5 of Oryza sativa subsp. japonica (Rice).